Here is a 691-residue protein sequence, read N- to C-terminus: DNA ligase (691 aa).

NAD(+)-binding positions include Asp-41–Asp-45, Ser-90–Leu-91, and Glu-130. Lys-132 acts as the N6-AMP-lysine intermediate in catalysis. NAD(+) contacts are provided by Arg-153, Glu-190, Lys-307, and Lys-331. Zn(2+)-binding residues include Cys-425, Cys-428, Cys-443, and Cys-449. The BRCT domain occupies Ala-610–Arg-691.

Belongs to the NAD-dependent DNA ligase family. LigA subfamily. Requires Mg(2+) as cofactor. The cofactor is Mn(2+).

It catalyses the reaction NAD(+) + (deoxyribonucleotide)n-3'-hydroxyl + 5'-phospho-(deoxyribonucleotide)m = (deoxyribonucleotide)n+m + AMP + beta-nicotinamide D-nucleotide.. In terms of biological role, DNA ligase that catalyzes the formation of phosphodiester linkages between 5'-phosphoryl and 3'-hydroxyl groups in double-stranded DNA using NAD as a coenzyme and as the energy source for the reaction. It is essential for DNA replication and repair of damaged DNA. The polypeptide is DNA ligase (Burkholderia multivorans (strain ATCC 17616 / 249)).